The primary structure comprises 421 residues: Subtilisin-like protease 2 (421 aa).

The N-terminal stretch at 1-16 is a signal peptide; that stretch reads MQLLNFGLLLLPFVAG. Residues 17-122 constitute a propeptide that is removed on maturation; the sequence is DLAPQPEPLL…VHPDQHVYLA (106 aa). The Inhibitor I9 domain maps to 36–122; that stretch reads QYIVTLKEGL…VHPDQHVYLA (87 aa). The Peptidase S8 domain occupies 131–421; the sequence is RWGLGYMSSK…ERKFTLPKYY (291 aa). Catalysis depends on charge relay system residues aspartate 169 and histidine 201. N-linked (GlcNAc...) asparagine glycosylation is found at asparagine 248, asparagine 261, and asparagine 348. Serine 357 functions as the Charge relay system in the catalytic mechanism. Asparagine 388 carries N-linked (GlcNAc...) asparagine glycosylation.

It belongs to the peptidase S8 family.

Its subcellular location is the secreted. Functionally, secreted subtilisin-like serine protease with keratinolytic activity that contributes to pathogenicity. This chain is Subtilisin-like protease 2 (SUB2), found in Trichophyton verrucosum (strain HKI 0517).